We begin with the raw amino-acid sequence, 273 residues long: 4-hydroxy-tetrahydrodipicolinate reductase (273 aa).

NAD(+) contacts are provided by residues 12–17 (GAGGRM) and Glu-38. An NADP(+)-binding site is contributed by Arg-39. NAD(+) contacts are provided by residues 102-104 (GTT) and 126-129 (AANF). Catalysis depends on His-159, which acts as the Proton donor/acceptor. A (S)-2,3,4,5-tetrahydrodipicolinate-binding site is contributed by His-160. Catalysis depends on Lys-163, which acts as the Proton donor. Residue 169 to 170 (GT) participates in (S)-2,3,4,5-tetrahydrodipicolinate binding.

This sequence belongs to the DapB family. As to quaternary structure, homotetramer.

It is found in the cytoplasm. The enzyme catalyses (S)-2,3,4,5-tetrahydrodipicolinate + NAD(+) + H2O = (2S,4S)-4-hydroxy-2,3,4,5-tetrahydrodipicolinate + NADH + H(+). The catalysed reaction is (S)-2,3,4,5-tetrahydrodipicolinate + NADP(+) + H2O = (2S,4S)-4-hydroxy-2,3,4,5-tetrahydrodipicolinate + NADPH + H(+). It functions in the pathway amino-acid biosynthesis; L-lysine biosynthesis via DAP pathway; (S)-tetrahydrodipicolinate from L-aspartate: step 4/4. Catalyzes the conversion of 4-hydroxy-tetrahydrodipicolinate (HTPA) to tetrahydrodipicolinate. The sequence is that of 4-hydroxy-tetrahydrodipicolinate reductase from Photorhabdus laumondii subsp. laumondii (strain DSM 15139 / CIP 105565 / TT01) (Photorhabdus luminescens subsp. laumondii).